Consider the following 168-residue polypeptide: Mediator of RNA polymerase II transcription subunit 7b (168 aa).

The segment covering 1–12 (MATATYPPPPPY) has biased composition (pro residues). The interval 1 to 33 (MATATYPPPPPYYRLYKDFSENTDSAPEPPPPI) is disordered. 2 coiled-coil regions span residues 64-92 (KDSN…ADVL) and 132-162 (IMEL…KDAF).

This sequence belongs to the Mediator complex subunit 7 family. Component of the Mediator complex. Interacts with MEE14/CBP1.

It is found in the nucleus. Its function is as follows. Component of the Mediator complex, a coactivator involved in the regulated transcription of nearly all RNA polymerase II-dependent genes. Mediator functions as a bridge to convey information from gene-specific regulatory proteins to the basal RNA polymerase II transcription machinery. The Mediator complex, having a compact conformation in its free form, is recruited to promoters by direct interactions with regulatory proteins and serves for the assembly of a functional pre-initiation complex with RNA polymerase II and the general transcription factors. The sequence is that of Mediator of RNA polymerase II transcription subunit 7b (MED7B) from Arabidopsis thaliana (Mouse-ear cress).